The chain runs to 276 residues: C-type lectin domain family 12 member B (276 aa).

Residues 1–43 (MSEDMTYATLTFQDSVAAGNNQDRNNLRKRGYPAPSSIWRQAA) are Cytoplasmic-facing. The ITIM motif motif lies at 5 to 10 (MTYATL). A Phosphotyrosine modification is found at Y7. Residues 44–64 (LGLLTLCVMLLIGLVTLGIMF) traverse the membrane as a helical; Signal-anchor for type II membrane protein segment. Topologically, residues 65–276 (LQMSSEINSD…AALVKIEDLD (212 aa)) are extracellular. N-linked (GlcNAc...) asparagine glycosylation is found at N91, N176, and N237. The C-type lectin domain maps to 150 to 264 (YQTSCYYFAV…CSAEISWICE (115 aa)). 2 disulfide bridges follow: C172–C263 and C242–C255.

Homodimer. Interacts (via ITIM motif) with PTPN6. Interacts (via ITIM motif) with PTPN11; this interaction triggers dephosphorylation and activation of PTPN11.

It localises to the cell membrane. Its function is as follows. Inhibitory receptor postulated to negatively regulate immune and non-immune functions. Upon phosphorylation, recruits SH2 domain-containing PTPN6 and PTPN11 phosphatases to its ITIM motif and antagonizes activation signals. Although it inhibits KLRK1/NKG2D-mediated signaling, it does not bind known ligands of KLRK1/NKG2D and therefore is not its inhibitory counterpart. May limit activation of myeloid cell subsets in response to infection or tissue inflammation. May protect target cells against natural killer cell-mediated lysis. May negatively regulate cell cycle and differentiation of melanocytes via inactivation of STAT3. This chain is C-type lectin domain family 12 member B (CLEC12B), found in Bos taurus (Bovine).